A 401-amino-acid chain; its full sequence is Argininosuccinate synthase (401 aa).

Residues 10–18 (AYSGGVDTS) and alanine 38 contribute to the ATP site. Tyrosine 89 serves as a coordination point for L-citrulline. Position 119 (glycine 119) interacts with ATP. Residues threonine 121, asparagine 125, and aspartate 126 each contribute to the L-aspartate site. Asparagine 125 is a binding site for L-citrulline. L-citrulline contacts are provided by arginine 129, serine 177, serine 186, glutamate 262, and tyrosine 274.

It belongs to the argininosuccinate synthase family. Type 1 subfamily. Homotetramer.

Its subcellular location is the cytoplasm. The enzyme catalyses L-citrulline + L-aspartate + ATP = 2-(N(omega)-L-arginino)succinate + AMP + diphosphate + H(+). The protein operates within amino-acid biosynthesis; L-arginine biosynthesis; L-arginine from L-ornithine and carbamoyl phosphate: step 2/3. This Prochlorococcus marinus (strain MIT 9313) protein is Argininosuccinate synthase.